Consider the following 122-residue polypeptide: Large ribosomal subunit protein uL14c (122 aa).

It belongs to the universal ribosomal protein uL14 family. In terms of assembly, part of the 50S ribosomal subunit.

The protein localises to the plastid. The protein resides in the chloroplast. Functionally, binds to 23S rRNA. This is Large ribosomal subunit protein uL14c from Chlamydomonas reinhardtii (Chlamydomonas smithii).